Reading from the N-terminus, the 260-residue chain is Flap endonuclease Xni (260 aa).

Position 109 (Asp109) interacts with Mg(2+). One can recognise a 5'-3' exonuclease domain in the interval 165–259 (VKPSQLADYW…DIRFTGPNKA (95 aa)). K(+) is bound by residues Leu176, Pro185, Val187, and Val190. Positions 189-194 (GVGPKA) are interaction with DNA.

It belongs to the Xni family. Mg(2+) serves as cofactor. Requires K(+) as cofactor.

Has flap endonuclease activity. During DNA replication, flap endonucleases cleave the 5'-overhanging flap structure that is generated by displacement synthesis when DNA polymerase encounters the 5'-end of a downstream Okazaki fragment. This chain is Flap endonuclease Xni, found in Vibrio campbellii (strain ATCC BAA-1116).